The following is a 525-amino-acid chain: Protein disulfide-isomerase A2 (525 aa).

Positions 1-21 are cleaved as a signal peptide; that stretch reads MSRQLLPVLLLLLLRASCPWG. The Thioredoxin 1 domain maps to 27–152; the sequence is RSPSEEPPEE…IAEWLRRRVG (126 aa). Catalysis depends on nucleophile residues Cys-71 and Cys-74. Residues Cys-71 and Cys-74 are joined by a disulfide bond. Asn-127 and Asn-284 each carry an N-linked (GlcNAc...) asparagine glycan. Residues 367–496 form the Thioredoxin 2 domain; sequence VLNGQVKPYL…FSKFLDNGGV (130 aa). Active-site nucleophile residues include Cys-418 and Cys-421. Cys-418 and Cys-421 are oxidised to a cystine. The interval 492–525 is disordered; sequence DNGGVLPTEEPPEEPAAPFPEPPANSTMGSKEEL. A compositionally biased stretch (pro residues) spans 505 to 514; sequence EPAAPFPEPP. N-linked (GlcNAc...) asparagine glycosylation occurs at Asn-516. Positions 516-525 are enriched in polar residues; the sequence is NSTMGSKEEL. Residues 522–525 carry the Prevents secretion from ER motif; the sequence is KEEL.

It belongs to the protein disulfide isomerase family. In terms of assembly, monomer; predominantly as monomer under reducing conditions. Homodimer; disulfide-linked. Part of a large chaperone multiprotein complex comprising DNAJB11, HSP90B1, HSPA5, HYOU, PDIA2, PDIA4, PDIA6, PPIB, SDF2L1, UGGT1 and very small amounts of ERP29, but not, or at very low levels, CALR nor CANX. The disulfide-linked homodimer exhibits an enhanced chaperone activity. In terms of processing, glycosylated. In terms of tissue distribution, highly expressed in pancreas (at protein level).

Its subcellular location is the endoplasmic reticulum lumen. The enzyme catalyses Catalyzes the rearrangement of -S-S- bonds in proteins.. In terms of biological role, acts as an intracellular estrogen-binding protein. May be involved in modulating cellular levels and biological functions of estrogens in the pancreas. May act as a chaperone that inhibits aggregation of misfolded proteins. The chain is Protein disulfide-isomerase A2 (PDIA2) from Homo sapiens (Human).